Consider the following 326-residue polypeptide: Glycerol-3-phosphate dehydrogenase [NAD(P)+] (326 aa).

The NADPH site is built by S10, F11, R31, and K108. Residues K108, G136, and S138 each coordinate sn-glycerol 3-phosphate. Residue A140 participates in NADPH binding. The sn-glycerol 3-phosphate site is built by K191, D246, S256, R257, and N258. K191 functions as the Proton acceptor in the catalytic mechanism. An NADPH-binding site is contributed by R257. Residues I281 and E283 each contribute to the NADPH site.

This sequence belongs to the NAD-dependent glycerol-3-phosphate dehydrogenase family.

Its subcellular location is the cytoplasm. The enzyme catalyses sn-glycerol 3-phosphate + NAD(+) = dihydroxyacetone phosphate + NADH + H(+). The catalysed reaction is sn-glycerol 3-phosphate + NADP(+) = dihydroxyacetone phosphate + NADPH + H(+). The protein operates within membrane lipid metabolism; glycerophospholipid metabolism. In terms of biological role, catalyzes the reduction of the glycolytic intermediate dihydroxyacetone phosphate (DHAP) to sn-glycerol 3-phosphate (G3P), the key precursor for phospholipid synthesis. The polypeptide is Glycerol-3-phosphate dehydrogenase [NAD(P)+] (Ehrlichia chaffeensis (strain ATCC CRL-10679 / Arkansas)).